The primary structure comprises 340 residues: Ubiquitin-like domain-containing CTD phosphatase (340 aa).

The 78-residue stretch at 24–101 (LTLTVKWNGK…MTMIGTVEDD (78 aa)) folds into the Ubiquitin-like domain. In terms of domain architecture, FCP1 homology spans 151-312 (CRQGKKLLVL…VKLTQYLLTI (162 aa)). Residues 151–312 (CRQGKKLLVL…VKLTQYLLTI (162 aa)) form a phosphatase region. Residues Asp161, Asp163, and Asp271 each contribute to the Mg(2+) site.

The cofactor is Mg(2+).

The protein localises to the nucleus. It catalyses the reaction O-phospho-L-seryl-[protein] + H2O = L-seryl-[protein] + phosphate. The enzyme catalyses O-phospho-L-threonyl-[protein] + H2O = L-threonyl-[protein] + phosphate. Dephosphorylates 26S nuclear proteasomes, thereby decreasing their proteolytic activity. The dephosphorylation may prevent assembly of the core and regulatory particles (CP and RP) into mature 26S proteasome. This is Ubiquitin-like domain-containing CTD phosphatase from Arabidopsis thaliana (Mouse-ear cress).